We begin with the raw amino-acid sequence, 114 residues long: Iron-sulfur cluster insertion protein ErpA (114 aa).

Iron-sulfur cluster-binding residues include Cys-42, Cys-106, and Cys-108.

It belongs to the HesB/IscA family. In terms of assembly, homodimer. The cofactor is iron-sulfur cluster.

Functionally, required for insertion of 4Fe-4S clusters for at least IspG. In Pasteurella multocida (strain Pm70), this protein is Iron-sulfur cluster insertion protein ErpA.